The following is a 386-amino-acid chain: Cytochrome b (386 aa).

Helical transmembrane passes span 39–59 (FGSL…FLAM), 83–104 (FMLK…YIHM), 119–139 (WNIG…GYVL), and 184–204 (FFSL…LHIL). Residues histidine 89 and histidine 103 each coordinate heme b. Residues histidine 188 and histidine 202 each coordinate heme b. A ubiquinone is bound at residue histidine 207. 4 consecutive transmembrane segments (helical) span residues 232-252 (YKDL…CYFM), 294-314 (LGGV…PFIH), 326-346 (LGKI…WLGA), and 353-374 (YIMI…LVPL).

Belongs to the cytochrome b family. The main subunits of complex b-c1 are: cytochrome b, cytochrome c1 and the Rieske protein. Requires heme b as cofactor.

Its subcellular location is the mitochondrion inner membrane. Functionally, component of the ubiquinol-cytochrome c reductase complex (complex III or cytochrome b-c1 complex) that is part of the mitochondrial respiratory chain. The b-c1 complex mediates electron transfer from ubiquinol to cytochrome c. Contributes to the generation of a proton gradient across the mitochondrial membrane that is then used for ATP synthesis. The sequence is that of Cytochrome b (MT-CYB) from Sarcophyton glaucum (Toadstool umbrella leather coral).